A 220-amino-acid polypeptide reads, in one-letter code: Glutathione S-transferase (220 aa).

The GST N-terminal domain occupies 1-77 (MLKLHGFSVS…YIEQTQSGKA (77 aa)). Glutathione is bound by residues Y12, V49, and 61 to 62 (ET). The GST C-terminal domain maps to 82–211 (DPFEQAKVRE…ADKEASMPAF (130 aa)).

The protein belongs to the GST superfamily. As to quaternary structure, monomer and homodimer.

It is found in the cytoplasm. It catalyses the reaction RX + glutathione = an S-substituted glutathione + a halide anion + H(+). Its function is as follows. Conjugation of reduced glutathione to a wide number of exogenous and endogenous hydrophobic electrophiles. This chain is Glutathione S-transferase, found in Pseudomonas putida (strain ATCC 700007 / DSM 6899 / JCM 31910 / BCRC 17059 / LMG 24140 / F1).